A 387-amino-acid chain; its full sequence is MDLFEYQAKELFAKHNVPSTPGRVTDTAEGAKAIATEIGRPVMVKAQVKIGGRGKAGGVKYAATPQDAYEHAKNILGLDIKGHIVKKLLVAEASDIAEEYYLSFLLDRANRTYLAMCSVEGGMEIEEVAATKPERLAKVPVNAVKGVDLDFARSIAEQGHLPAEVLDTAAVTIAKLWELFVAEDATLVEVNPLVRTPDHKILALDAKITLDGNADFRQPGHAEFEDRAATDPLELKAKEHDLNYVKLDGQVGIIGNGAGLVMSTLDVVAYAGEKHGGVKPANFLDIGGGASAEVMAAGLDVVLGDQQVKSVFVNVFGGITSCDAVATGIVKALGMLGDEANKPLVVRLDGNNVEEGRRILTEANHPLVTLVATMDEAADKAAELASA.

An ATP-grasp domain is found at 9 to 236 (KELFAKHNVP…RAATDPLELK (228 aa)). ATP contacts are provided by residues Lys45, 52 to 54 (GRG), Ser94, and Glu99. Residues Asn191 and Asp205 each contribute to the Mg(2+) site. Substrate contacts are provided by residues Asn256 and 318-320 (GIT).

Belongs to the succinate/malate CoA ligase beta subunit family. Heterotetramer of two alpha and two beta subunits. The cofactor is Mg(2+).

It catalyses the reaction succinate + ATP + CoA = succinyl-CoA + ADP + phosphate. The enzyme catalyses GTP + succinate + CoA = succinyl-CoA + GDP + phosphate. It participates in carbohydrate metabolism; tricarboxylic acid cycle; succinate from succinyl-CoA (ligase route): step 1/1. Functionally, succinyl-CoA synthetase functions in the citric acid cycle (TCA), coupling the hydrolysis of succinyl-CoA to the synthesis of either ATP or GTP and thus represents the only step of substrate-level phosphorylation in the TCA. The beta subunit provides nucleotide specificity of the enzyme and binds the substrate succinate, while the binding sites for coenzyme A and phosphate are found in the alpha subunit. In Mycobacterium tuberculosis (strain CDC 1551 / Oshkosh), this protein is Succinate--CoA ligase [ADP-forming] subunit beta.